We begin with the raw amino-acid sequence, 217 residues long: uncharacterized protein (217 aa).

This is an uncharacterized protein from Methanocaldococcus jannaschii (strain ATCC 43067 / DSM 2661 / JAL-1 / JCM 10045 / NBRC 100440) (Methanococcus jannaschii).